The chain runs to 332 residues: Holliday junction branch migration complex subunit RuvB (332 aa).

The interval 1-181 (MSRILDNEIM…FGITGHMEYY (181 aa)) is large ATPase domain (RuvB-L). ATP-binding positions include L20, R21, G62, K65, T66, T67, 128–130 (EDF), R171, Y181, and R218. Mg(2+) is bound at residue T66. The segment at 182–252 (AHADLTEIVE…ITDKALTMLD (71 aa)) is small ATPAse domain (RuvB-S). The tract at residues 255-332 (HEGLDYVDQK…EHLGYEYNEK (78 aa)) is head domain (RuvB-H). Residues R291, R310, R312, and R315 each contribute to the DNA site.

It belongs to the RuvB family. Homohexamer. Forms an RuvA(8)-RuvB(12)-Holliday junction (HJ) complex. HJ DNA is sandwiched between 2 RuvA tetramers; dsDNA enters through RuvA and exits via RuvB. An RuvB hexamer assembles on each DNA strand where it exits the tetramer. Each RuvB hexamer is contacted by two RuvA subunits (via domain III) on 2 adjacent RuvB subunits; this complex drives branch migration. In the full resolvosome a probable DNA-RuvA(4)-RuvB(12)-RuvC(2) complex forms which resolves the HJ.

It localises to the cytoplasm. It catalyses the reaction ATP + H2O = ADP + phosphate + H(+). In terms of biological role, the RuvA-RuvB-RuvC complex processes Holliday junction (HJ) DNA during genetic recombination and DNA repair, while the RuvA-RuvB complex plays an important role in the rescue of blocked DNA replication forks via replication fork reversal (RFR). RuvA specifically binds to HJ cruciform DNA, conferring on it an open structure. The RuvB hexamer acts as an ATP-dependent pump, pulling dsDNA into and through the RuvAB complex. RuvB forms 2 homohexamers on either side of HJ DNA bound by 1 or 2 RuvA tetramers; 4 subunits per hexamer contact DNA at a time. Coordinated motions by a converter formed by DNA-disengaged RuvB subunits stimulates ATP hydrolysis and nucleotide exchange. Immobilization of the converter enables RuvB to convert the ATP-contained energy into a lever motion, pulling 2 nucleotides of DNA out of the RuvA tetramer per ATP hydrolyzed, thus driving DNA branch migration. The RuvB motors rotate together with the DNA substrate, which together with the progressing nucleotide cycle form the mechanistic basis for DNA recombination by continuous HJ branch migration. Branch migration allows RuvC to scan DNA until it finds its consensus sequence, where it cleaves and resolves cruciform DNA. The chain is Holliday junction branch migration complex subunit RuvB from Streptococcus pneumoniae (strain CGSP14).